A 283-amino-acid polypeptide reads, in one-letter code: MAARSIALGTIRFANDAPFVLIGGINVLESREFALEVAGHYKTVCTKLGIPLVFKASFDKANRSSIHSYRGPGLREGLEILQVVKDTHGIPVITDVHSPEEATPAAEVCDIIQLPAFLARQTDLIEAMAKTGAVINIKKPQFLSPSQMSNVVEKFRECGNENLLICERGSNFGYDNLVVDMLAFGVMKHCCNDLPLIFDVTHALQCRDPSGAASGGRRSQVVDLARSGMAVGLAGLFLESHPDPDKARCDGPSALPLALLEPFLQQVKAIDEVVKALPTLSVS.

It belongs to the KdsA family.

It is found in the cytoplasm. The enzyme catalyses D-arabinose 5-phosphate + phosphoenolpyruvate + H2O = 3-deoxy-alpha-D-manno-2-octulosonate-8-phosphate + phosphate. The protein operates within carbohydrate biosynthesis; 3-deoxy-D-manno-octulosonate biosynthesis; 3-deoxy-D-manno-octulosonate from D-ribulose 5-phosphate: step 2/3. It functions in the pathway bacterial outer membrane biogenesis; lipopolysaccharide biosynthesis. The protein is 2-dehydro-3-deoxyphosphooctonate aldolase of Prochlorococcus marinus (strain MIT 9313).